A 255-amino-acid polypeptide reads, in one-letter code: MSGNYGKVYLVGSGPGDPELLTLKARRLIDSAEVIVYDQLPGKAILDSMPASAEKINVGKYAGSHTMTQAEINEVLVQKAKEGKMVVRLKGGDPYVFGRGGEEAEVLVAEEIEFEVVPGITSAIAVPAYAGIPVTHRESTSMVTFITGHEDPTKEESGLDWETLAKFGGTIVILMGVKMLGRNAEELMKHGKAPDTPVAVIERGTRADQRVTVGTLANIASLAEERKVKAPAITVVGDVVHLHDILGEQRTGVDF.

Residues P15, 91–93 (GGD), 121–122 (TS), M175, and A232 each bind S-adenosyl-L-homocysteine.

The protein belongs to the precorrin methyltransferase family. In terms of assembly, homodimer.

The catalysed reaction is uroporphyrinogen III + 2 S-adenosyl-L-methionine = precorrin-2 + 2 S-adenosyl-L-homocysteine + H(+). The protein operates within porphyrin-containing compound metabolism; siroheme biosynthesis; precorrin-2 from uroporphyrinogen III: step 1/1. Its function is as follows. Involved in the archaeal biosynthesis of heme. Catalyzes the methylation of carbons 2 and 7 of uroporphyrinogen-III (UROGEN) to yield precorrin-2. It does not catalyze the overmethylation of precorrin-2 to trimethylpyrrocorphin. This chain is S-adenosyl-L-methionine-dependent uroporphyrinogen III methyltransferase, found in Methanosarcina barkeri (strain Fusaro / DSM 804).